The following is a 326-amino-acid chain: Vitamin B12 import system permease protein BtuC (326 aa).

9 consecutive transmembrane segments (helical) span residues 17–39 (LSLS…QWIA), 59–81 (RTLA…QALF), 88–107 (PGLL…AVLL), 111–133 (QLAG…LILL), 146–168 (LLAG…YFST), 188–205 (WQQS…IWIC), 242–264 (MVGV…PHIL), 274–296 (VLLP…VARL), and 303–322 (LPIG…WLLL).

The protein belongs to the binding-protein-dependent transport system permease family. FecCD subfamily. The complex is composed of two ATP-binding proteins (BtuD), two transmembrane proteins (BtuC) and a solute-binding protein (BtuF).

The protein localises to the cell inner membrane. Its function is as follows. Part of the ABC transporter complex BtuCDF involved in vitamin B12 import. Involved in the translocation of the substrate across the membrane. In Salmonella paratyphi A (strain ATCC 9150 / SARB42), this protein is Vitamin B12 import system permease protein BtuC.